A 193-amino-acid polypeptide reads, in one-letter code: Adenine phosphoribosyltransferase (193 aa).

It belongs to the purine/pyrimidine phosphoribosyltransferase family. As to quaternary structure, homodimer.

It localises to the cytoplasm. The catalysed reaction is AMP + diphosphate = 5-phospho-alpha-D-ribose 1-diphosphate + adenine. The protein operates within purine metabolism; AMP biosynthesis via salvage pathway; AMP from adenine: step 1/1. Functionally, catalyzes a salvage reaction resulting in the formation of AMP, that is energically less costly than de novo synthesis. The chain is Adenine phosphoribosyltransferase from Bifidobacterium longum subsp. infantis (strain ATCC 15697 / DSM 20088 / JCM 1222 / NCTC 11817 / S12).